The following is a 341-amino-acid chain: Ribosomal RNA small subunit methyltransferase C (341 aa).

Belongs to the methyltransferase superfamily. RsmC family. Monomer.

It is found in the cytoplasm. The catalysed reaction is guanosine(1207) in 16S rRNA + S-adenosyl-L-methionine = N(2)-methylguanosine(1207) in 16S rRNA + S-adenosyl-L-homocysteine + H(+). Specifically methylates the guanine in position 1207 of 16S rRNA in the 30S particle. The sequence is that of Ribosomal RNA small subunit methyltransferase C from Vibrio parahaemolyticus serotype O3:K6 (strain RIMD 2210633).